Consider the following 239-residue polypeptide: Nicotinamide riboside transporter PnuC (239 aa).

Residues 1 to 21 (MDFFSVQNILVHIPIGAGGYD) lie on the Cytoplasmic side of the membrane. Residues 22 to 42 (LSWIEAVGTIAGLLCIGLASL) form a helical membrane-spanning segment. Residues 43–48 (EKISNY) lie on the Periplasmic side of the membrane. Residues 49 to 68 (FFGLINVTLFGIIFFQIQLY) traverse the membrane as a helical segment. Residues 69 to 71 (ASL) are Cytoplasmic-facing. A helical transmembrane segment spans residues 72–89 (LLQVFFFAANIYGWYAWS). Over 90-109 (RQTSQNEAELKIRWLPLPKA) the chain is Periplasmic. The chain crosses the membrane as a helical span at residues 110–127 (LSWLAVCVVSIGLMTVFI). The Cytoplasmic portion of the chain corresponds to 128-157 (NPVFAFLTRVAVMIMQALGLQVVMPELQPD). The helical transmembrane segment at 158 to 177 (AFPFWDSCMMVLSIVAMILM) threads the bilayer. The Periplasmic portion of the chain corresponds to 178 to 183 (TRKYVE). A helical membrane pass occupies residues 184-206 (NWLLWVIINVISVVIFALQGVYA). Residues tryptophan 188 and asparagine 192 each contribute to the beta-nicotinamide D-riboside site. At 207 to 239 (MSLEYIILTFIALNGSRMWINSARERGSRALSH) the chain is on the cytoplasmic side.

The protein belongs to the nicotinamide ribonucleoside (NR) uptake permease (TC 4.B.1) family.

It localises to the cell inner membrane. Required for nicotinamide riboside transport across the inner membrane. The protein is Nicotinamide riboside transporter PnuC (pnuC) of Escherichia coli (strain K12).